A 310-amino-acid polypeptide reads, in one-letter code: Ribosomal RNA small subunit methyltransferase H (310 aa).

S-adenosyl-L-methionine is bound by residues alanine 32–histidine 34, aspartate 51, phenylalanine 78, aspartate 99, and glutamine 106. A disordered region spans residues glycine 290 to lysine 310.

This sequence belongs to the methyltransferase superfamily. RsmH family.

The protein resides in the cytoplasm. The catalysed reaction is cytidine(1402) in 16S rRNA + S-adenosyl-L-methionine = N(4)-methylcytidine(1402) in 16S rRNA + S-adenosyl-L-homocysteine + H(+). Its function is as follows. Specifically methylates the N4 position of cytidine in position 1402 (C1402) of 16S rRNA. This chain is Ribosomal RNA small subunit methyltransferase H, found in Exiguobacterium sp. (strain ATCC BAA-1283 / AT1b).